The primary structure comprises 170 residues: Transcriptional repressor NrdR (170 aa).

Residues C3 to C34 fold into a zinc finger. One can recognise an ATP-cone domain in the interval L46–D136. Positions R148–V170 are disordered.

This sequence belongs to the NrdR family. It depends on Zn(2+) as a cofactor.

Its function is as follows. Negatively regulates transcription of bacterial ribonucleotide reductase nrd genes and operons by binding to NrdR-boxes. This is Transcriptional repressor NrdR from Beutenbergia cavernae (strain ATCC BAA-8 / DSM 12333 / CCUG 43141 / JCM 11478 / NBRC 16432 / NCIMB 13614 / HKI 0122).